The chain runs to 108 residues: ER membrane protein complex subunit 6 (108 aa).

3 helical membrane-spanning segments follow: residues 21-41, 45-65, and 86-106; these read VVSF…GILG, YEGL…LFAL, and ILDG…LVYV.

This sequence belongs to the EMC6 family.

The protein resides in the endoplasmic reticulum membrane. This is ER membrane protein complex subunit 6 from Schizosaccharomyces pombe (strain 972 / ATCC 24843) (Fission yeast).